Here is a 157-residue protein sequence, read N- to C-terminus: Cysteine protease Nivulian-2 (157 aa).

It belongs to the intron maturase 2 family. MatK subfamily. As to quaternary structure, monomer. Glycosylated. As to expression, accumulates in latex (at protein level).

Inhibited by HgCl(2), iodoacetamide (IAA) and, to a far lesser extent, by SDS, hydrogen peroxide H(1)O(2), KCl, NaCl, ZnCl(2), AgSO(4), CdCl(2), FeCl(3), PMSF, Pepstatin A and EDTA. Repressed moderately by many organic solvents such as diethyl ether, ethy lacetate, acetophenone, butanol, trichloroethylene, tetrahydrofuran, methanol, chloroform and dichloromethane, and, to a lesser extent, by propanol, benzyl alcohol and chlorobenzene. In terms of biological role, cysteine protease inducing milk clotting by cleaving casein. Exhibits biomedical activities such as wound healing, haemostatic and antibacterial activity, as well as agricultural application in biocontrol process against the infectious management of the root knot nematode Meloidogyne incognita. The protein is Cysteine protease Nivulian-2 of Euphorbia nivulia (Leafy milk hedge).